Here is a 514-residue protein sequence, read N- to C-terminus: 2-isopropylmalate synthase (514 aa).

The Pyruvate carboxyltransferase domain maps to 4 to 266; that stretch reads INVFDTSLRD…KTGLKLSELK (263 aa). Mn(2+) contacts are provided by D13, H201, H203, and N237. A regulatory domain region spans residues 390-514; that stretch reads ELTALQVTYG…AKREMAKVES (125 aa).

It belongs to the alpha-IPM synthase/homocitrate synthase family. LeuA type 1 subfamily. Homodimer. Mn(2+) serves as cofactor.

It localises to the cytoplasm. It catalyses the reaction 3-methyl-2-oxobutanoate + acetyl-CoA + H2O = (2S)-2-isopropylmalate + CoA + H(+). It participates in amino-acid biosynthesis; L-leucine biosynthesis; L-leucine from 3-methyl-2-oxobutanoate: step 1/4. In terms of biological role, catalyzes the condensation of the acetyl group of acetyl-CoA with 3-methyl-2-oxobutanoate (2-ketoisovalerate) to form 3-carboxy-3-hydroxy-4-methylpentanoate (2-isopropylmalate). This is 2-isopropylmalate synthase from Shouchella clausii (strain KSM-K16) (Alkalihalobacillus clausii).